The sequence spans 205 residues: Probable GTP-binding protein EngB (205 aa).

The EngB-type G domain occupies 29 to 203; it reads QGAEIAFIGR…KAVLSQWFRS (175 aa). Residues 37-44, 64-68, 82-85, 149-152, and 182-184 contribute to the GTP site; these read GRSNAGKS, GRTQM, DLPG, TKSD, and FSS. 2 residues coordinate Mg(2+): S44 and T66.

It belongs to the TRAFAC class TrmE-Era-EngA-EngB-Septin-like GTPase superfamily. EngB GTPase family. It depends on Mg(2+) as a cofactor.

Necessary for normal cell division and for the maintenance of normal septation. The protein is Probable GTP-binding protein EngB of Coxiella burnetii (strain RSA 331 / Henzerling II).